Here is a 361-residue protein sequence, read N- to C-terminus: Peptide chain release factor 1 (361 aa).

At Q235 the chain carries N5-methylglutamine.

This sequence belongs to the prokaryotic/mitochondrial release factor family. In terms of processing, methylated by PrmC. Methylation increases the termination efficiency of RF1.

The protein localises to the cytoplasm. In terms of biological role, peptide chain release factor 1 directs the termination of translation in response to the peptide chain termination codons UAG and UAA. This Xanthomonas euvesicatoria pv. vesicatoria (strain 85-10) (Xanthomonas campestris pv. vesicatoria) protein is Peptide chain release factor 1.